The sequence spans 629 residues: 1-deoxy-D-xylulose-5-phosphate synthase (629 aa).

Thiamine diphosphate-binding positions include H72 and 113 to 115 (GHS). D144 lines the Mg(2+) pocket. Residues 145–146 (GA), N173, Y284, and E366 each bind thiamine diphosphate. N173 contacts Mg(2+).

Belongs to the transketolase family. DXPS subfamily. As to quaternary structure, homodimer. Mg(2+) is required as a cofactor. Thiamine diphosphate serves as cofactor.

The enzyme catalyses D-glyceraldehyde 3-phosphate + pyruvate + H(+) = 1-deoxy-D-xylulose 5-phosphate + CO2. It functions in the pathway metabolic intermediate biosynthesis; 1-deoxy-D-xylulose 5-phosphate biosynthesis; 1-deoxy-D-xylulose 5-phosphate from D-glyceraldehyde 3-phosphate and pyruvate: step 1/1. Catalyzes the acyloin condensation reaction between C atoms 2 and 3 of pyruvate and glyceraldehyde 3-phosphate to yield 1-deoxy-D-xylulose-5-phosphate (DXP). The protein is 1-deoxy-D-xylulose-5-phosphate synthase of Halalkalibacterium halodurans (strain ATCC BAA-125 / DSM 18197 / FERM 7344 / JCM 9153 / C-125) (Bacillus halodurans).